Consider the following 135-residue polypeptide: Photosystem II extrinsic protein U (135 aa).

An N-terminal signal peptide occupies residues 1–29 (MKRLLSWLTGALLMAGLLAGLILPGSVHA).

Belongs to the PsbU family. PSII is composed of 1 copy each of membrane proteins PsbA, PsbB, PsbC, PsbD, PsbE, PsbF, PsbH, PsbI, PsbJ, PsbK, PsbL, PsbM, PsbT, PsbX, PsbY, Psb30/Ycf12, peripheral proteins PsbO, CyanoQ (PsbQ), PsbU, PsbV and a large number of cofactors. It forms dimeric complexes.

It is found in the cellular thylakoid membrane. Functionally, one of the extrinsic, lumenal subunits of photosystem II (PSII). PSII is a light-driven water plastoquinone oxidoreductase, using light energy to abstract electrons from H(2)O, generating a proton gradient subsequently used for ATP formation. The extrinsic proteins stabilize the structure of photosystem II oxygen-evolving complex (OEC), the ion environment of oxygen evolution and protect the OEC against heat-induced inactivation. In Parasynechococcus marenigrum (strain WH8102), this protein is Photosystem II extrinsic protein U.